A 319-amino-acid polypeptide reads, in one-letter code: Beta-ketoacyl-[acyl-carrier-protein] synthase III (319 aa).

Catalysis depends on residues C113 and H246. Positions 247–251 (QANIR) are ACP-binding. Residue N276 is part of the active site.

Belongs to the thiolase-like superfamily. FabH family. In terms of assembly, homodimer.

It localises to the cytoplasm. The catalysed reaction is malonyl-[ACP] + acetyl-CoA + H(+) = 3-oxobutanoyl-[ACP] + CO2 + CoA. The protein operates within lipid metabolism; fatty acid biosynthesis. Catalyzes the condensation reaction of fatty acid synthesis by the addition to an acyl acceptor of two carbons from malonyl-ACP. Catalyzes the first condensation reaction which initiates fatty acid synthesis and may therefore play a role in governing the total rate of fatty acid production. Possesses both acetoacetyl-ACP synthase and acetyl transacylase activities. Its substrate specificity determines the biosynthesis of branched-chain and/or straight-chain of fatty acids. The chain is Beta-ketoacyl-[acyl-carrier-protein] synthase III from Ehrlichia canis (strain Jake).